A 335-amino-acid chain; its full sequence is Dihydroorotate dehydrogenase (quinone) (335 aa).

Residues Ala59–Lys63 and Thr83 contribute to the FMN site. Lys63 contacts substrate. Asn108–Phe112 is a substrate binding site. Asn136 and Asn169 together coordinate FMN. A substrate-binding site is contributed by Asn169. Ser172 acts as the Nucleophile in catalysis. Residue Asn174 coordinates substrate. FMN contacts are provided by Lys214 and Thr242. Asn243–Thr244 is a binding site for substrate. FMN-binding positions include Gly265, Gly294, and Tyr315–Ser316.

The protein belongs to the dihydroorotate dehydrogenase family. Type 2 subfamily. Monomer. FMN is required as a cofactor.

It is found in the cell membrane. The enzyme catalyses (S)-dihydroorotate + a quinone = orotate + a quinol. It functions in the pathway pyrimidine metabolism; UMP biosynthesis via de novo pathway; orotate from (S)-dihydroorotate (quinone route): step 1/1. Functionally, catalyzes the conversion of dihydroorotate to orotate with quinone as electron acceptor. This is Dihydroorotate dehydrogenase (quinone) from Neisseria meningitidis serogroup A / serotype 4A (strain DSM 15465 / Z2491).